We begin with the raw amino-acid sequence, 265 residues long: Inositol monophosphatase 2 (265 aa).

Residues glutamate 65, aspartate 86, leucine 88, and aspartate 89 each contribute to the Mg(2+) site. Glutamate 65 contributes to the substrate binding site. Substrate contacts are provided by residues 88–91 (LDGT), 189–191 (GSC), glutamate 208, and aspartate 216. Mg(2+) is bound at residue aspartate 216.

Belongs to the inositol monophosphatase superfamily. Requires Mg(2+) as cofactor. In terms of tissue distribution, low expression in roots, stems, leaves, flowers and young and mature green fruits. Expressed in the stem/leaf junctions, below the shoot apex and on the abaxial side of the petiole of the first expanded leaflets.

The enzyme catalyses a myo-inositol phosphate + H2O = myo-inositol + phosphate. The protein operates within polyol metabolism; myo-inositol biosynthesis; myo-inositol from D-glucose 6-phosphate: step 2/2. In terms of biological role, responsible for the provision of inositol required for synthesis of phosphatidylinositol and polyphosphoinositides. This is Inositol monophosphatase 2 (IMP2) from Solanum lycopersicum (Tomato).